Consider the following 242-residue polypeptide: Probable transcriptional regulatory protein NGO_1291 (242 aa).

The protein belongs to the TACO1 family.

Its subcellular location is the cytoplasm. The polypeptide is Probable transcriptional regulatory protein NGO_1291 (Neisseria gonorrhoeae (strain ATCC 700825 / FA 1090)).